The sequence spans 192 residues: UPF0301 protein BMA10247_1859 (192 aa).

This sequence belongs to the UPF0301 (AlgH) family.

In Burkholderia mallei (strain NCTC 10247), this protein is UPF0301 protein BMA10247_1859.